The chain runs to 395 residues: Enolase (395 aa).

Positions 136 and 145 each coordinate substrate. The active-site Proton donor is the Glu188. Residues Asp223, Glu271, and Asp296 each coordinate Mg(2+). The substrate site is built by Glu271 and Asp296. Lys321 serves as the catalytic Proton acceptor. Residues 348–351 and Lys372 each bind substrate; that span reads SHRS.

It belongs to the enolase family. Homodimer. The cofactor is Mg(2+).

Its subcellular location is the cytoplasm. It carries out the reaction (2R)-2-phosphoglycerate = phosphoenolpyruvate + H2O. It functions in the pathway carbohydrate degradation; glycolysis; pyruvate from D-glyceraldehyde 3-phosphate: step 4/5. This Alligator mississippiensis (American alligator) protein is Enolase.